A 347-amino-acid chain; its full sequence is 4-hydroxy-2-oxovalerate aldolase (347 aa).

One can recognise a Pyruvate carboxyltransferase domain in the interval 11–262 (PVVVDTTLRD…NPGLDVFKLL (252 aa)). 19 to 20 (RD) is a binding site for substrate. Asp20 contributes to the Mn(2+) binding site. His23 serves as the catalytic Proton acceptor. 2 residues coordinate substrate: Ser173 and His201. Mn(2+) is bound by residues His201 and His203. A substrate-binding site is contributed by Tyr292.

The protein belongs to the 4-hydroxy-2-oxovalerate aldolase family. As to quaternary structure, homodimer. Can also form a heterotetramer composed of two aldolase (TTHB246) and two dehydrogenase (TTHB247) subunits. Upon complex formation, the aldolase shows a 5-fold increase in substrate affinity, while the dehydrogenase shows a 3-fold decrease; the kcat values of each enzyme are reduced by 2-fold when they are in a complex. It depends on Co(2+) as a cofactor. Ni(2+) serves as cofactor. Requires Mn(2+) as cofactor.

The enzyme catalyses (S)-4-hydroxy-2-oxopentanoate = acetaldehyde + pyruvate. The catalysed reaction is (S)-4-hydroxy-2-oxohexanoate = propanal + pyruvate. Appears to be allosterically activated by NADH. Its function is as follows. Catalyzes the retro-aldol cleavage of both 4-hydroxy-2-oxopentanoate (HOPA) and 4-hydroxy-2-oxohexanoate (HOHA) to pyruvate and acetaldehyde or propanaldehyde, respectively. The aldehydes produced by this reaction are directly channeled to the dehydrogenase TTHB247, ensuring that these toxic aldehydes are sequestered from cellular components. Is involved in the meta-cleavage pathway for the degradation of aromatic compounds. Appears to be stereospecific since it can cleave (4S)-4-hydroxy-2-oxopentanoate but not the (4R) isomer. Is not able to catalyze the aldol addition of 2-oxobutyrate with acetaldehyde; this indicates that the enzyme is specific for pyruvate as the carbonyl donor. In Thermus thermophilus (strain ATCC 27634 / DSM 579 / HB8), this protein is 4-hydroxy-2-oxovalerate aldolase.